We begin with the raw amino-acid sequence, 145 residues long: Transcriptional regulator SlyA (145 aa).

Residues 2 to 135 (ELPLGSDLAR…LALLVSRLEK (134 aa)) enclose the HTH marR-type domain. Positions 49–72 (QIQLAKAIGIEQPSLVRTLDQLEE) form a DNA-binding region, H-T-H motif.

The protein belongs to the SlyA family. Homodimer.

In terms of biological role, transcription regulator that can specifically activate or repress expression of target genes. Regulates genes involved in production of antibiotic and exoenzyme virulence determinants in the phytopathogen. Required for the expression of the virulence protein evf during Drosophila melanogaster infection. The polypeptide is Transcriptional regulator SlyA (Pectobacterium carotovorum subsp. carotovorum (Erwinia carotovora subsp. carotovora)).